Reading from the N-terminus, the 259-residue chain is Probable kinetochore protein spc25 (259 aa).

A compositionally biased stretch (polar residues) spans 1-20; that stretch reads MSRKSVMSSTFEPSLSTSRQ. A disordered region spans residues 1–25; that stretch reads MSRKSVMSSTFEPSLSTSRQPLGPS. A coiled-coil region spans residues 59 to 162; the sequence is RKRVLEERNQ…HAAQLEAQAR (104 aa).

It belongs to the SPC25 family. Component of the NDC80 complex, which consists of kpr-1/ndc80, kpr-2/nuf2, kpr-3/spc24 and kpr-4/spc25.

The protein localises to the nucleus. It localises to the chromosome. Its subcellular location is the centromere. The protein resides in the kinetochore. Acts as a component of the essential kinetochore-associated NDC80 complex, which is required for chromosome segregation and spindle checkpoint activity. The polypeptide is Probable kinetochore protein spc25 (kpr-4) (Neurospora crassa (strain ATCC 24698 / 74-OR23-1A / CBS 708.71 / DSM 1257 / FGSC 987)).